The chain runs to 44 residues: Photosystem II reaction center protein K (44 aa).

Positions 1 to 7 (MESLLLA) are excised as a propeptide. A helical membrane pass occupies residues 23–43 (FPVIPVFFLLLAFVWQAAVGF).

It belongs to the PsbK family. In terms of assembly, PSII is composed of 1 copy each of membrane proteins PsbA, PsbB, PsbC, PsbD, PsbE, PsbF, PsbH, PsbI, PsbJ, PsbK, PsbL, PsbM, PsbT, PsbX, PsbY, PsbZ, Psb30/Ycf12, at least 3 peripheral proteins of the oxygen-evolving complex and a large number of cofactors. It forms dimeric complexes.

It localises to the plastid. Its subcellular location is the chloroplast thylakoid membrane. In terms of biological role, one of the components of the core complex of photosystem II (PSII). PSII is a light-driven water:plastoquinone oxidoreductase that uses light energy to abstract electrons from H(2)O, generating O(2) and a proton gradient subsequently used for ATP formation. It consists of a core antenna complex that captures photons, and an electron transfer chain that converts photonic excitation into a charge separation. This is Photosystem II reaction center protein K from Thalassiosira pseudonana (Marine diatom).